The chain runs to 263 residues: Chymotrypsinogen 2 (263 aa).

An N-terminal signal peptide occupies residues 1 to 18 (MAFLWLLSCFALLGTAFG). 5 disulfide bridges follow: Cys19-Cys140, Cys60-Cys76, Cys154-Cys219, Cys186-Cys200, and Cys209-Cys238. Residues 34–261 (IVNGEDAVPG…LIPWVQQILQ (228 aa)) form the Peptidase S1 domain. His75 (charge relay system) is an active-site residue. Ser93 is modified (phosphoserine). Asp120 serves as the catalytic Charge relay system. Residue Ser213 is the Charge relay system of the active site.

Belongs to the peptidase S1 family.

The protein localises to the secreted. Its subcellular location is the extracellular space. The catalysed reaction is Preferential cleavage: Tyr-|-Xaa, Trp-|-Xaa, Phe-|-Xaa, Leu-|-Xaa.. The sequence is that of Chymotrypsinogen 2 (CTRB1) from Canis lupus familiaris (Dog).